The following is a 132-amino-acid chain: Small ribosomal subunit protein uS8 (132 aa).

The protein belongs to the universal ribosomal protein uS8 family. As to quaternary structure, part of the 30S ribosomal subunit. Contacts proteins S5 and S12.

Functionally, one of the primary rRNA binding proteins, it binds directly to 16S rRNA central domain where it helps coordinate assembly of the platform of the 30S subunit. The chain is Small ribosomal subunit protein uS8 from Bacillus mycoides (strain KBAB4) (Bacillus weihenstephanensis).